Here is a 385-residue protein sequence, read N- to C-terminus: MEKLSEALDLLQEELLSLYEQNSQSLADQSRHWSLLRKEQVLLYYARGKGIMRIGMQPVPPQSVSQAKAKQAIEQSLYIDSLLHSKYANEPWTLCDTSRERLVAEPAYTFKKGGKQIDVRYGDSEENIVRYVLWLDIYYQDEFDTWEKAHGKLDHKGLSYMHGTQQVYYVDFEEEANKYSETGKYEILNQPTTIPTTSAAGTSGPELPGHSASGSGACSLTPRKGPSRRPGRRSSRFPRRSGGRGRLGRGGSGELPPQPQPSSSWSPPSPQQVGSKHQLRTTSSAGGRLGRLLQEAYDPPVLVLAGDPNSLKCIRYRLSHKHRGLYLGASTTWKWTSGGDGASKHDRGSARMLLAFLSDQQREDFMDRVTFPKSVRVFRGGLDEL.

The transactivation domain stretch occupies residues 1–199 (MEKLSEALDL…QPTTIPTTSA (199 aa)). Polar residues predominate over residues 189-201 (NQPTTIPTTSAAG). A disordered region spans residues 189 to 282 (NQPTTIPTTS…VGSKHQLRTT (94 aa)). Over residues 225 to 247 (GPSRRPGRRSSRFPRRSGGRGRL) the composition is skewed to basic residues. A compositionally biased stretch (low complexity) spans 261–275 (PSSSWSPPSPQQVGS). A DNA-binding domain region spans residues 298–385 (DPPVLVLAGD…RVFRGGLDEL (88 aa)).

This sequence belongs to the papillomaviridae E2 protein family. In terms of assembly, binds DNA as homodimer. Interacts with protein E1; this interaction greatly increases E1 DNA-binding activity. Interacts with protein L1; this interaction enhances E2-dependent replication and transcription activation. Interacts with protein L2; this interaction inhibits E2 transcriptional activity but not DNA replication function E2. Interacts with protein E7; this interaction inhibits E7 oncogenic activity. Interacts with host TAF1; this interaction modulates E2-dependent transcriptional regulation. Interacts with host BRD4; this interaction mediates E2 transcriptional activation function. Additionally, the interaction with host BRD4 on mitotic chromosomes mediates tethering of the viral genome. Interacts with host TOPBP1; this interaction is required for optimal viral DNA replication. In terms of processing, phosphorylated.

The protein localises to the host nucleus. In terms of biological role, plays a role in the initiation of viral DNA replication. A dimer of E2 interacts with a dimer of E1 in order to improve specificity of E1 DNA binding activity. Once the complex recognizes and binds DNA at specific sites, the E2 dimer is removed from DNA. E2 also regulates viral transcription through binding to the E2RE response element (5'-ACCNNNNNNGGT-3') present in multiple copies in the regulatory regions of the viral genome. Activates or represses transcription depending on E2RE's position with regards to proximal promoter elements including the TATA-box. Repression occurs by sterically hindering the assembly of the transcription initiation complex. In Canis lupus familiaris (Dog), this protein is Regulatory protein E2.